A 330-amino-acid chain; its full sequence is uncharacterized protein (330 aa).

This is an uncharacterized protein from Schizosaccharomyces pombe (strain 972 / ATCC 24843) (Fission yeast).